We begin with the raw amino-acid sequence, 318 residues long: Peroxisomal and mitochondrial division factor 1 (318 aa).

The interval 1–39 is disordered; the sequence is MADVEDRAAKGISDYDQGGVKTTELERKIEDMENKNQEL. The Cytoplasmic segment spans residues 1 to 291; it reads MADVEDRAAK…QKGSLEAEYQ (291 aa). Positions 19–260 form a coiled coil; the sequence is GVKTTELERK…KKVEEGNKTV (242 aa). The segment covering 23 to 39 has biased composition (basic and acidic residues); that stretch reads TELERKIEDMENKNQEL. A helical transmembrane segment spans residues 292–312; that stretch reads WPVVAAGSVGAAGLVAATFFV. Topologically, residues 313–318 are mitochondrial intermembrane; sequence CYSKLR.

Homodimer. Interacts with PMD2.

It localises to the peroxisome membrane. Its subcellular location is the mitochondrion outer membrane. Functionally, involved in morphogenesis and proliferation of peroxisomes and mitochondria, independently from the previously defined pathway controlled by the FIS1-DRP3 complex. This Arabidopsis thaliana (Mouse-ear cress) protein is Peroxisomal and mitochondrial division factor 1.